Reading from the N-terminus, the 720-residue chain is MRNGINILSYPRFLSFCEVFVLLLCNFSDNPKLQTFTQMLNSLFLSARAFPSLITNSSSRRAKSSQFDQFRENRGVSDAAIKVPTAPWMKGPLLLRPDEILDTKKRNKPRKVEEKTFKALNRRESGVRGKKAMKKIVRNVEKLDEDSDSEETQMDDLSEFEYLGRIEEKVESKDRFGGKMPWEREEERFILRRMKKESVPTTAELILDEGLLNRLRREASKMRKWVNVRKAGVTELVVNKIKSMWKLNELAMVRFDVPLCRNMERAQEIIEMKTGGLVVLSKKEFLVVYRGGPSYSSEGQDEISSSLYEREADRLLDGLGPRYMDWWMRRPFPVDADLLPEVVNGYMTPSRRCPPNTRAKLTDEELTYLRNIAQPLPFHFVLGRNYGLQGLASAIVKLWEKCIIAKIAIKWGALNTNNEEMADELRYLTGGVLILRNKYLIVLYRGKDFLSDEVADLVEDRERLLSRYQHFEETKRESDIELLEVVTNGKQLKETNKSGTLLEFQELQRKFGEMDPRNLETEAEKARLEKELKSQEHKLSILKSKIEKSNMELFKLNSLWKPSEGDDDIEILTNEERECLRRIGLKMNSSLVLGRRGVFFGVMEGLHQHWKHREVAKVITMQKLFSRVVYTAKALETESNGVLISIEKLKEGHAILIYRGKNYKRPSSKLMAQNLLTKRKALQRSVVMQRLGSLKFFAYQRERAIEDLKVSLVNLQDSAF.

A chloroplast-targeting transit peptide spans 1–77; sequence MRNGINILSY…DQFRENRGVS (77 aa). Residues 131 to 159 adopt a coiled-coil conformation; that stretch reads KAMKKIVRNVEKLDEDSDSEETQMDDLSE. CRM domains lie at 205 to 301 and 359 to 456; these read LILD…EGQD and AKLT…EVAD. 2 coiled-coil regions span residues 447–477 and 517–553; these read KDFL…TKRE and RNLE…NMEL. Residues 570-670 form the CRM 3 domain; sequence EILTNEEREC…KNYKRPSSKL (101 aa).

As to quaternary structure, homodimer. Interacts with RNA. Part of large ribonucleo-protein complexes that include group IIA introns and CRS1.

Its subcellular location is the plastid. It is found in the chloroplast stroma. Functionally, required for the splicing of group IIA introns in chloroplasts, by regulating the intron folding. Forms splicing particles with RNA. May also be involved in chloroplast protein translation. The chain is Chloroplastic group IIA intron splicing facilitator CRS1, chloroplastic from Arabidopsis thaliana (Mouse-ear cress).